The following is a 364-amino-acid chain: Spermatogenesis-associated protein 22 (364 aa).

Composition is skewed to polar residues over residues 1 to 13, 30 to 48, 73 to 108, 137 to 169, and 177 to 189; these read MKRN…TRST, QPLT…NASD, KTVN…SKSD, LMTN…LPNQ, and QTKS…STMR. Disordered stretches follow at residues 1–51 and 70–189; these read MKRN…DNYD and PLTK…STMR.

As to quaternary structure, component of a multiprotein complex with MEIOB and RPA2. Interacts with MEIOB. Interacts with the complex BRME1:HSF2BP:BRCA2.

Its subcellular location is the chromosome. Meiosis-specific protein required for homologous recombination in meiosis I. The protein is Spermatogenesis-associated protein 22 (SPATA22) of Bos taurus (Bovine).